The chain runs to 169 residues: Ecotin (169 aa).

A signal peptide spans 1–21 (MKKCSIILASVLLATSINAIA). The cysteines at positions 76 and 113 are disulfide-linked.

This sequence belongs to the protease inhibitor I11 (ecotin) family. Homodimer.

The protein resides in the periplasm. Its function is as follows. General inhibitor of pancreatic serine proteases: inhibits chymotrypsin, trypsin, elastases, factor X, kallikrein as well as a variety of other proteases. This Yersinia pseudotuberculosis serotype O:1b (strain IP 31758) protein is Ecotin.